The following is a 202-amino-acid chain: UPF0056 membrane protein CPn_1010/CP_0843/CPj1010/CpB1048 (202 aa).

The next 6 helical transmembrane spans lie at 7–27 (LSLL…FVAL), 39–59 (VILR…TFGR), 61–81 (FFQF…FLLF), 105–125 (PIFF…TALL), 137–157 (IIFT…LCSS), and 175–195 (FGIA…SIAF).

The protein belongs to the UPF0056 (MarC) family.

It localises to the cell membrane. This is UPF0056 membrane protein CPn_1010/CP_0843/CPj1010/CpB1048 from Chlamydia pneumoniae (Chlamydophila pneumoniae).